The primary structure comprises 365 residues: PDZ and LIM domain protein 3 (365 aa).

Residues 1–84 form the PDZ domain; that stretch reads MPQNVILPGP…QLCLKIDRAE (84 aa). Serine 18 is modified (phosphoserine). The interval 126 to 156 is disordered; that stretch reads FIIPGRSSGCSTPSGIDGGSGRSTPSSVSTL. Residues 147–156 show a composition bias toward polar residues; that stretch reads RSTPSSVSTL. The LIM zinc-binding domain maps to 293–352; it reads PLCDKCGSGIVGAVVKARDKYRHPECFVCADCNLNLKQKGYFFVEGELYCETHARARMRP.

Interacts with ACTN2. Forms a heterodimer with PDLIM4 (via LIM domain).

Its subcellular location is the cytoplasm. It is found in the myofibril. It localises to the sarcomere. The protein resides in the z line. May play a role in the organization of actin filament arrays within muscle cells. In Sus scrofa (Pig), this protein is PDZ and LIM domain protein 3 (PDLIM3).